Consider the following 165-residue polypeptide: Nucleotide-binding protein Ccon26_01810 (165 aa).

This sequence belongs to the YajQ family.

Nucleotide-binding protein. This is Nucleotide-binding protein Ccon26_01810 from Campylobacter concisus (strain 13826).